The sequence spans 230 residues: D-glycero-alpha-D-manno-heptose 1-phosphate guanylyltransferase (230 aa).

The protein belongs to the D-alpha-D-heptose-1-P guanylyltransferase family.

The enzyme catalyses D-glycero-alpha-D-manno-heptose 1-phosphate + GTP + H(+) = GDP-D-glycero-alpha-D-manno-heptose + diphosphate. Its pathway is nucleotide-sugar biosynthesis; GDP-D-glycero-alpha-D-manno-heptose biosynthesis; GDP-D-glycero-alpha-D-manno-heptose from D-glycero-alpha-D-manno-heptose 7-phosphate: step 3/3. It participates in cell surface structure biogenesis; S-layer biogenesis. Its function is as follows. Catalyzes the GDP transfer from GTP to D-glycero-alpha-D-manno-heptose 1-phosphate, yielding GDP-D-alpha-D-heptose. Cannot use ATP, CTP, dTTP or UTP as substrate. The polypeptide is D-glycero-alpha-D-manno-heptose 1-phosphate guanylyltransferase (hddC) (Aneurinibacillus thermoaerophilus).